We begin with the raw amino-acid sequence, 398 residues long: MTAFKTLDDIGDVTGKRVLVRVDLNVPMIDGAVSDATRIQAAMPTIRELSDKGAIVLLLAHFGRPKGAKNPTQSLSLVMGGVEDVLGHSVMFIPEAVGEGAKAGVAVLAPGDVAVLENTRFYPGEEQNDPAFADALAEIGDLYVNDAFSAAHRAHGSTEGIARRLPAYAGRAMEAELKALDAALGNPVQPVAAVVGGAKVSSKIDVLRNLVGKVDHLIIGGGMANTFLAARGVDVGRSLCEHELVDTANAIFDAADAAGCTIHLPYDVVVAKEFAPNPPTRTVNVHEVAADEMILDVGPAAIEALADVLKNCRTLVWNGPLGAFETPPFDTATVALARTAAALTREGSLTSVAGGGDTVAALNHAGVAGDFTFVSTAGGAFLEWMEGKPLPGVDALKA.

Residues 23-25 (DLN), Arg38, 61-64 (HFGR), Arg120, and Arg153 each bind substrate. ATP contacts are provided by residues Lys203, Glu325, and 355–358 (GGDT).

The protein belongs to the phosphoglycerate kinase family. In terms of assembly, monomer.

The protein localises to the cytoplasm. It carries out the reaction (2R)-3-phosphoglycerate + ATP = (2R)-3-phospho-glyceroyl phosphate + ADP. The protein operates within carbohydrate degradation; glycolysis; pyruvate from D-glyceraldehyde 3-phosphate: step 2/5. This is Phosphoglycerate kinase from Sphingopyxis alaskensis (strain DSM 13593 / LMG 18877 / RB2256) (Sphingomonas alaskensis).